We begin with the raw amino-acid sequence, 50 residues long: Large ribosomal subunit protein eL39 (50 aa).

The span at 1–12 (MGKKSKASKKRL) shows a compositional bias: basic residues. Disordered stretches follow at residues 1–20 (MGKK…RQNS) and 30–50 (TNRD…DTDE).

The protein belongs to the eukaryotic ribosomal protein eL39 family.

The protein is Large ribosomal subunit protein eL39 (rpl39e) of Halobacterium salinarum (strain ATCC 700922 / JCM 11081 / NRC-1) (Halobacterium halobium).